The following is a 354-amino-acid chain: MSIHIQQVNKHFGNFVAVDSVNLEIKTGELTALLGPSGSGKTTLLRIIAGLEQADSGIVKFNGEDITTQHVSERGVGFVFQHYALFKHMTVFENVAYGLTVRPRKTRPSKAEIAEKVHSLLKLVQLDWTADRYPSQLSGGQRQRIALARALAVEPKVLLLDEPFGALDAKVRAELRRWLRRLHDEINVTTVFVTHDQEEALEVADKIVVMNKGRIEQQGTPEEVYDTPSNPFVYEFLGNVNLFHARVKHGHSTIGNIHIPSPEHAGGEEQQGLAYVRPHEIEVLTQPTENAIKVNLDLVTIVGPVARLEVLTEIDEQLIHVELSKVQFKQLGISKGDNAWIQPRYSKVFLGEGI.

An ABC transporter domain is found at 3–237; sequence IHIQQVNKHF…PSNPFVYEFL (235 aa). 35-42 contacts ATP; that stretch reads GPSGSGKT.

It belongs to the ABC transporter superfamily. Sulfate/tungstate importer (TC 3.A.1.6) family. As to quaternary structure, the complex is composed of two ATP-binding proteins (CysA), two transmembrane proteins (CysT and CysW) and a solute-binding protein (CysP).

It localises to the cell inner membrane. The catalysed reaction is sulfate(out) + ATP + H2O = sulfate(in) + ADP + phosphate + H(+). It carries out the reaction thiosulfate(out) + ATP + H2O = thiosulfate(in) + ADP + phosphate + H(+). Its function is as follows. Part of the ABC transporter complex CysAWTP involved in sulfate/thiosulfate import. Responsible for energy coupling to the transport system. This Shewanella oneidensis (strain ATCC 700550 / JCM 31522 / CIP 106686 / LMG 19005 / NCIMB 14063 / MR-1) protein is Sulfate/thiosulfate import ATP-binding protein CysA 2.